A 356-amino-acid chain; its full sequence is LQARQQTVSALEDKIADYKRRMADAVSRKKMDTKPTDPTGIEPDDHLKERSSLRYGNVLDVNAIDIEEPSGQTADWYTIGVYVIGFTLPIILKALYMLSTRGRQTVKENKGTRIRFKDDTSFEDINGIRRPKHLYVSMPTAQSTMKAEELTPGRFRTIVCGLFPTQIQVRNIMSPVMGVIGFSFFVKDWADRIREFMEKECPFIKPEVKPGTPAQEAEFLKRNKVYFMQRQDVLDKNHVADIDKLIDYAASGDPTSPDNIESPNAPWVFACAPDRCPPTCIYVAGMAELGAFFSILQDMRNTIMASKTVGTAEEKLKKKSSFYQSYLRRTQSMGIQLDQRIILLYMLEWGKEMVDH.

Residues 1-28 adopt a coiled-coil conformation; that stretch reads LQARQQTVSALEDKIADYKRRMADAVSR. The span at 26–35 shows a compositional bias: basic and acidic residues; that stretch reads VSRKKMDTKP. A disordered region spans residues 26-46; the sequence is VSRKKMDTKPTDPTGIEPDDH. Positions 37–205 are interaction with glycoprotein N; it reads DPTGIEPDDH…FMEKECPFIK (169 aa). The segment at 57 to 82 is homomultimerization; that stretch reads NVLDVNAIDIEEPSGQTADWYTIGVY. The tract at residues 107–132 is interaction with host RPS19; sequence KENKGTRIRFKDDTSFEDINGIRRPK. Residues 132-174 form a viral RNA-binding region; sequence KHLYVSMPTAQSTMKAEELTPGRFRTIVCGLFPTQIQVRNIMS. The short motif at 135 to 138 is the YxxL element; the sequence is YVSM. Positions 145-148 are interaction with host UBE2I/UBC9; it reads MKAE.

The protein belongs to the hantavirus nucleocapsid protein family. As to quaternary structure, homotrimer. Homomultimer. Homomultimerizes and binds to viral genomic RNA to form the nucleocapsid. Interacts with host MAP1LC3B; this interaction participates to the protection of Gn from virus-triggered autophagy. Interacts with host SNAP29; this interaction participates to the protection of glycoprotein N from virus-triggered autophagy. Interacts (via N-terminus) with host RPS19; this interaction probably mediates the loading of the 40S ribosomal subunit on viral capped mRNA during N-mediated translation initiation. Interacts with the viral RdRp. Interacts with host SUMO1 (via N-terminus). Interacts with host DAXX. Interacts with the viral glycoprotein N (via C-terminus). Interacts with the viral glycoprotein C (via C-terminus).

It is found in the virion. Its subcellular location is the host cytoplasm. The protein resides in the host perinuclear region. The protein localises to the host Golgi apparatus. It localises to the host cis-Golgi network. Functionally, encapsidates the genome protecting it from nucleases. The encapsidated genomic RNA is termed the nucleocapsid (NC) and serves as template for transcription and replication. The nucleocapsid has a left-handed helical structure. As a trimer, specifically binds and acts as a chaperone to unwind the panhandle structure formed by the viral RNA (vRNA) termini. Involved in the transcription and replication initiation of vRNA by mediating primer annealing. Plays a role in cap snatching by sequestering capped RNAs in P bodies for use by the viral RdRp during transcription initiation. Substitutes for the cellular cap-binding complex (eIF4F) to preferentially facilitate the translation of capped mRNAs. Initiates the translation by specifically binding to the cap and 40S ribosomal subunit. Prevents the viral glycoprotein N (Gn) from autophagy-dependent breakdown maybe by blocking autophagosome formation. Inhibits host EIF2AK2/PKR dimerization to prevent PKR-induced translational shutdown in cells and thus the activation of the antiviral state. Also displays sequence-unspecific DNA endonuclease activity. The polypeptide is Nucleoprotein (N) (Puumala virus (strain Berkel)).